The chain runs to 197 residues: Dephospho-CoA kinase (197 aa).

The DPCK domain maps to Ile-2 to Glu-197. Gly-10 to Ala-15 contacts ATP.

It belongs to the CoaE family.

The protein localises to the cytoplasm. It catalyses the reaction 3'-dephospho-CoA + ATP = ADP + CoA + H(+). It participates in cofactor biosynthesis; coenzyme A biosynthesis; CoA from (R)-pantothenate: step 5/5. In terms of biological role, catalyzes the phosphorylation of the 3'-hydroxyl group of dephosphocoenzyme A to form coenzyme A. This is Dephospho-CoA kinase from Gamma-proteobacterium EBAC31A08.